A 243-amino-acid chain; its full sequence is 3,4-dihydroxyphthalate decarboxylase (243 aa).

The Proton donor/acceptor role is filled by Glu86. Residues Glu86, His105, His107, and His173 each contribute to the a divalent metal cation site.

Belongs to the aldolase class II family. The cofactor is a divalent metal cation.

It carries out the reaction 3,4-dihydroxyphthalate + H(+) = 3,4-dihydroxybenzoate + CO2. It functions in the pathway xenobiotic degradation; phthalate degradation. Catalyzes the decarboxylation of 3,4-dihydroxyphthalate to protocatechuate (3,4-dihydroxybenzoate) during phthalate metabolism. This chain is 3,4-dihydroxyphthalate decarboxylase, found in Rhodococcus jostii (strain RHA1).